A 418-amino-acid chain; its full sequence is Type II methyltransferase M.MspI (418 aa).

The SAM-dependent MTase C5-type domain maps to 105-404 (FKFIDLFSGI…EQISLALKTV (300 aa)). The active site involves C174.

The protein belongs to the class I-like SAM-binding methyltransferase superfamily. C5-methyltransferase family.

The catalysed reaction is a 2'-deoxycytidine in DNA + S-adenosyl-L-methionine = a 5-methyl-2'-deoxycytidine in DNA + S-adenosyl-L-homocysteine + H(+). Functionally, a methylase, recognizes the double-stranded sequence 5'-CCGG-3', methylates C-1 on both strands, and protects the DNA from cleavage by the MspI endonuclease. The polypeptide is Type II methyltransferase M.MspI (mspIM) (Moraxella sp).